The chain runs to 583 residues: Threonine--tRNA ligase (583 aa).

The catalytic stretch occupies residues 185-478 (DHRKLGRELD…LVEHYGGAFP (294 aa)). The Zn(2+) site is built by C278, H329, and H455.

The protein belongs to the class-II aminoacyl-tRNA synthetase family. Homodimer. The cofactor is Zn(2+).

Its subcellular location is the cytoplasm. The catalysed reaction is tRNA(Thr) + L-threonine + ATP = L-threonyl-tRNA(Thr) + AMP + diphosphate + H(+). Catalyzes the attachment of threonine to tRNA(Thr) in a two-step reaction: L-threonine is first activated by ATP to form Thr-AMP and then transferred to the acceptor end of tRNA(Thr). Also edits incorrectly charged L-seryl-tRNA(Thr). The sequence is that of Threonine--tRNA ligase from Borrelia hermsii (strain HS1 / DAH).